A 139-amino-acid chain; its full sequence is Actin-depolymerizing factor 9 (139 aa).

The ADF-H domain occupies 7 to 139 (GLAVNDECKF…SLDIIRARAH (133 aa)).

It belongs to the actin-binding proteins ADF family.

Its function is as follows. Actin-depolymerizing protein. Severs actin filaments (F-actin) and binds to actin monomers. The polypeptide is Actin-depolymerizing factor 9 (ADF9) (Oryza sativa subsp. japonica (Rice)).